A 155-amino-acid polypeptide reads, in one-letter code: Small ribosomal subunit protein uS7c (155 aa).

The protein belongs to the universal ribosomal protein uS7 family. In terms of assembly, part of the 30S ribosomal subunit.

It localises to the plastid. Functionally, one of the primary rRNA binding proteins, it binds directly to 16S rRNA where it nucleates assembly of the head domain of the 30S subunit. The protein is Small ribosomal subunit protein uS7c (rps7) of Lathraea clandestina (Purple toothwort).